Here is a 368-residue protein sequence, read N- to C-terminus: Ferrochelatase (368 aa).

Fe cation-binding residues include H209 and E290.

The protein belongs to the ferrochelatase family.

It localises to the cytoplasm. It catalyses the reaction heme b + 2 H(+) = protoporphyrin IX + Fe(2+). It participates in porphyrin-containing compound metabolism; protoheme biosynthesis; protoheme from protoporphyrin-IX: step 1/1. Catalyzes the ferrous insertion into protoporphyrin IX. This chain is Ferrochelatase, found in Herminiimonas arsenicoxydans.